We begin with the raw amino-acid sequence, 100 residues long: Aspartyl/glutamyl-tRNA(Asn/Gln) amidotransferase subunit C (100 aa).

It belongs to the GatC family. As to quaternary structure, heterotrimer of A, B and C subunits.

It catalyses the reaction L-glutamyl-tRNA(Gln) + L-glutamine + ATP + H2O = L-glutaminyl-tRNA(Gln) + L-glutamate + ADP + phosphate + H(+). It carries out the reaction L-aspartyl-tRNA(Asn) + L-glutamine + ATP + H2O = L-asparaginyl-tRNA(Asn) + L-glutamate + ADP + phosphate + 2 H(+). Allows the formation of correctly charged Asn-tRNA(Asn) or Gln-tRNA(Gln) through the transamidation of misacylated Asp-tRNA(Asn) or Glu-tRNA(Gln) in organisms which lack either or both of asparaginyl-tRNA or glutaminyl-tRNA synthetases. The reaction takes place in the presence of glutamine and ATP through an activated phospho-Asp-tRNA(Asn) or phospho-Glu-tRNA(Gln). In Staphylococcus haemolyticus (strain JCSC1435), this protein is Aspartyl/glutamyl-tRNA(Asn/Gln) amidotransferase subunit C.